Reading from the N-terminus, the 205-residue chain is Holliday junction branch migration complex subunit RuvA (205 aa).

Residues 1–64 form a domain I region; sequence MIGKLKGILE…EEAIRLFGFV (64 aa). The segment at 65–143 is domain II; it reads AKAEQEWFCL…PFNDNALHFT (79 aa). Residues 144-149 are flexible linker; sequence PQPHLE. Positions 150 to 205 are domain III; that stretch reads VTHQPTNDALSALVKLGFERDQAARALALAMNALEGETVSSALLIRHSLKLLSPST.

Belongs to the RuvA family. In terms of assembly, homotetramer. Forms an RuvA(8)-RuvB(12)-Holliday junction (HJ) complex. HJ DNA is sandwiched between 2 RuvA tetramers; dsDNA enters through RuvA and exits via RuvB. An RuvB hexamer assembles on each DNA strand where it exits the tetramer. Each RuvB hexamer is contacted by two RuvA subunits (via domain III) on 2 adjacent RuvB subunits; this complex drives branch migration. In the full resolvosome a probable DNA-RuvA(4)-RuvB(12)-RuvC(2) complex forms which resolves the HJ.

It localises to the cytoplasm. The RuvA-RuvB-RuvC complex processes Holliday junction (HJ) DNA during genetic recombination and DNA repair, while the RuvA-RuvB complex plays an important role in the rescue of blocked DNA replication forks via replication fork reversal (RFR). RuvA specifically binds to HJ cruciform DNA, conferring on it an open structure. The RuvB hexamer acts as an ATP-dependent pump, pulling dsDNA into and through the RuvAB complex. HJ branch migration allows RuvC to scan DNA until it finds its consensus sequence, where it cleaves and resolves the cruciform DNA. This is Holliday junction branch migration complex subunit RuvA from Bartonella quintana (strain Toulouse) (Rochalimaea quintana).